Consider the following 263-residue polypeptide: MSDLISALLLGILEGLTEFLPISSTGHLLIAEQWLGRRSDFFNIVIQAGAILAICLALRQKLWTLATGLGERANRDYVLKIGVAFLVTAVVGLIVRKAGWQLPETIQPVAWALLIGGVWMLVAEHFAGKLPERDVVTWKVAIAVGLAQVVAGVFPGTSRSASAIFLAMLLGLSKRSAAADFVFMVGIPTMFAASGYALLEMYKEGGFGSENWTDVSVAFIAATLTGFVVVKWLLGYIKKHRFTVFAVYRILLGAALLLWLPAA.

7 helical membrane-spanning segments follow: residues 38-58, 75-95, 108-128, 135-155, 181-201, 217-237, and 242-262; these read RSDF…CLAL, RDYV…GLIV, PVAW…HFAG, VVTW…GVFP, FVFM…LLEM, VAFI…LGYI, and FTVF…WLPA.

This sequence belongs to the UppP family.

It localises to the cell inner membrane. The enzyme catalyses di-trans,octa-cis-undecaprenyl diphosphate + H2O = di-trans,octa-cis-undecaprenyl phosphate + phosphate + H(+). Functionally, catalyzes the dephosphorylation of undecaprenyl diphosphate (UPP). Confers resistance to bacitracin. The protein is Undecaprenyl-diphosphatase of Xanthomonas campestris pv. campestris (strain 8004).